The chain runs to 1700 residues: Rho guanine nucleotide exchange factor 28 (1700 aa).

Residues 288–343 (TEKATMPSGAAETEEEVRNLESGRSPSEEEEDAKSIKSQVDGPSEHEDQDRLPLDR) form a disordered region. A phosphoserine mark is found at Ser-312 and Ser-314. The span at 330-343 (PSEHEDQDRLPLDR) shows a compositional bias: basic and acidic residues. Ser-478 carries the phosphoserine modification. Residues 483–532 (VADSEGEGGSEPPICYAVGSQSSPRTGLPSGDELDSFETNTEPDCNISRT) are disordered. The residue at position 623 (Ser-623) is a Phosphoserine. The Phorbol-ester/DAG-type zinc-finger motif lies at 651-698 (RHQFVPGTFSGVLQCSGCDKTLLGKESLQCANCKANTHKGCKDAVPPC). Residues 846-1041 (KRQDVIFELM…KDMIAAVDLK (196 aa)) enclose the DH domain. The region spanning 1095–1184 (ATGRFKDILA…NWMRRIQQAV (90 aa)) is the PH domain. Disordered stretches follow at residues 1184 to 1205 (VESC…RRKA) and 1289 to 1328 (KMGD…TEGT). The span at 1191 to 1205 (EGGRTSESDEERRKA) shows a compositional bias: basic and acidic residues. The segment at 1292 to 1301 (DVSQSSEESP) is interaction with PTK2/FAK1; required for regulation of axonal branching and synapse formation. Residues 1309 to 1325 (TPSTQDVPASPTASLVT) show a composition bias toward polar residues. Residues 1369 to 1380 (IIQAIQNLTRLL) form a mediates cytoplasmic retention and interaction with YWHAH region. The stretch at 1421 to 1522 (QEKSRYLEKQ…RERQKMRVQQ (102 aa)) forms a coiled coil. The tract at residues 1421–1700 (QEKSRYLEKQ…DGAEENILYL (280 aa)) is interaction with microtubules. Residues 1493–1524 (QLQEYQQSLERLREGQRMVERERQKMRVQQGL) are RNA-binding. Ser-1535 is modified (phosphoserine). Residues 1563 to 1576 (FINEAFGHMSLNTS) are mediates cytoplasmic retention and interaction with MAPK8IP1. The interval 1602 to 1700 (SESPTELKID…DGAEENILYL (99 aa)) is disordered. Position 1604 is a phosphoserine (Ser-1604). Low complexity predominate over residues 1647 to 1663 (DLDSFQSESSSPQDSNQ). The span at 1664 to 1675 (RGPQPQTLTTEA) shows a compositional bias: polar residues.

In terms of assembly, homooligomer; forms some cytoplasmic aggregates. Forms a complex with MAPK8 and MAPK8IP1. Interacts with RHOA. Interacts with microtubules. Interacts with YWHAE and YWHAH. Interacts with PTK2/FAK1. Interacts with NEFL. Interacts with CTNND2; prevents interaction with RHOA. In terms of processing, phosphorylated on tyrosine upon stimulation of cells by laminin. As to expression, highly enriched in the brain (at protein level). Also detected in lung and kidney.

It is found in the cytoplasm. Its subcellular location is the cell membrane. In terms of biological role, functions as a RHOA-specific guanine nucleotide exchange factor regulating signaling pathways downstream of integrins and growth factor receptors. Functions in axonal branching, synapse formation and dendritic morphogenesis. Also functions in focal adhesion formation, cell motility and B-lymphocytes activation. May regulate NEFL expression and aggregation and play a role in apoptosis. This Mus musculus (Mouse) protein is Rho guanine nucleotide exchange factor 28 (Arhgef28).